Here is a 263-residue protein sequence, read N- to C-terminus: UPF0246 protein Strop_2927 (263 aa).

It belongs to the UPF0246 family.

The sequence is that of UPF0246 protein Strop_2927 from Salinispora tropica (strain ATCC BAA-916 / DSM 44818 / JCM 13857 / NBRC 105044 / CNB-440).